A 220-amino-acid polypeptide reads, in one-letter code: Type II restriction enzyme NspV (220 aa).

It carries out the reaction Endonucleolytic cleavage of DNA to give specific double-stranded fragments with terminal 5'-phosphates.. Functionally, a P subtype restriction enzyme that recognizes the double-stranded sequence 5'-TTCGAA-3' and cleaves after T-2. The sequence is that of Type II restriction enzyme NspV from Nostoc sp. (strain ATCC 29411 / PCC 7524).